We begin with the raw amino-acid sequence, 568 residues long: Periplasmic trehalase (568 aa).

An N-terminal signal peptide occupies residues Met1–Ala39. Substrate is bound by residues Arg169, Trp176–Asp177, Asn213, Arg222–Gln224, Arg294–Glu296, and Gly327. Active-site proton donor/acceptor residues include Asp329 and Glu511. Glu526 serves as a coordination point for substrate.

The protein belongs to the glycosyl hydrolase 37 family.

The protein resides in the periplasm. The catalysed reaction is alpha,alpha-trehalose + H2O = alpha-D-glucose + beta-D-glucose. Its function is as follows. Provides the cells with the ability to utilize trehalose at high osmolarity by splitting it into glucose molecules that can subsequently be taken up by the phosphotransferase-mediated uptake system. This Xanthomonas oryzae pv. oryzae (strain MAFF 311018) protein is Periplasmic trehalase.